Here is a 479-residue protein sequence, read N- to C-terminus: MSVLLVGVSHRTAPVPVLERVAVTDTDRPKLTDKLLASSHISEAMIVSTCNRVEIYAVVDAFHGALAEVGELLADHSGLDLTDLHRHAYVRYSEAAAEHLFAVASGLDSMVIGEQQILGQIRTAYASSDAQQAAGRTLHELAQQALRVGKRVHSETGIDSAGASVVSVALDRAAGIVGDGGLTGRTAVVVGAGSMGGLSVAHLTRAGIGRIVVVNRTKERAEHLADTARANGVEAEALELSELPAAMAQADVLVTCTGAVGAVVTLADTHRALAQPGRDAERPLVICDLGLPRDVEPAVSGLPGVTVLDMESLQRDPAAGAAASDADAARTIVAAELANYLAGQRLAEVTPTVTALRQRAADVVEAELMRLDSRLPGLDDPERDEVARTVRRVVDKLLHAPTVRVKQLASAPGGDSYAAALRELFELSPGSVEAVAKPTDLGGATDLSAIDITDGFIAGQDPRLRRFVTDDNHGKESQA.

Residues Thr49–Arg52, Ser109, Glu114–Gln116, and Gln120 each bind substrate. The active-site Nucleophile is the Cys50. NADP(+) is bound at residue Gly191 to Gly196.

It belongs to the glutamyl-tRNA reductase family. As to quaternary structure, homodimer.

The enzyme catalyses (S)-4-amino-5-oxopentanoate + tRNA(Glu) + NADP(+) = L-glutamyl-tRNA(Glu) + NADPH + H(+). It functions in the pathway porphyrin-containing compound metabolism; protoporphyrin-IX biosynthesis; 5-aminolevulinate from L-glutamyl-tRNA(Glu): step 1/2. Its function is as follows. Catalyzes the NADPH-dependent reduction of glutamyl-tRNA(Glu) to glutamate 1-semialdehyde (GSA). The sequence is that of Glutamyl-tRNA reductase from Rhodococcus jostii (strain RHA1).